Reading from the N-terminus, the 166-residue chain is Transcriptional repressor NrdR (166 aa).

Residues 3 to 34 fold into a zinc finger; sequence CPFCRNPDSRVVDSRMADDGSSIRRRRQCPEC. The ATP-cone domain maps to 46-136; sequence LSVIKRSGVG…VYQAFESLED (91 aa).

It belongs to the NrdR family. It depends on Zn(2+) as a cofactor.

In terms of biological role, negatively regulates transcription of bacterial ribonucleotide reductase nrd genes and operons by binding to NrdR-boxes. The chain is Transcriptional repressor NrdR from Paenarthrobacter aurescens (strain TC1).